The chain runs to 563 residues: 4-hydroxy-7-methoxy-3-oxo-3,4-dihydro-2H-1,4-benzoxazin-2-yl glucoside beta-D-glucosidase 2, chloroplastic (563 aa).

A chloroplast-targeting transit peptide spans 1 to 51 (MAPLLAAAMNHAAHPVLRSHLGPNNESFSRHHLSSSPQSSKRRFNLSFTPR). The tract at residues 17-43 (LRSHLGPNNESFSRHHLSSSPQSSKRR) is disordered. Residues glutamine 89, histidine 193, and 241-242 (NE) each bind a beta-D-glucoside. The active-site Proton donor is glutamate 242. Cysteines 261 and 267 form a disulfide. Residues 322–358 (SFLDEQAKERSMDINLGWFLEPVVRGDYPFSMRSLAR) are dimerization. A beta-D-glucoside is bound at residue tyrosine 384. Dimerization regions lie at residues 391–402 (HIDISPKYSPVL) and 447–450 (KYGN). A beta-D-glucoside is bound by residues glutamate 457, tryptophan 508, 515 to 516 (EW), and tyrosine 524. Residue glutamate 457 is the Nucleophile of the active site.

It belongs to the glycosyl hydrolase 1 family. Homo- and heterodimer. As to expression, expressed in leaves only starting at day 6 after germination.

Its subcellular location is the plastid. It localises to the chloroplast. The catalysed reaction is Hydrolysis of terminal, non-reducing beta-D-glucosyl residues with release of beta-D-glucose.. It carries out the reaction DIMBOA beta-D-glucoside + H2O = DIMBOA + D-glucose. It catalyses the reaction DIBOA beta-D-glucoside + H2O = DIBOA + D-glucose. In terms of biological role, beta-glucosidase acting poorly on artificial aryl beta-glucosides. Has no activity toward the chromogenic substrate 6-bromo-2-naphthyl-beta-D-glucoside (6BNGlc). The polypeptide is 4-hydroxy-7-methoxy-3-oxo-3,4-dihydro-2H-1,4-benzoxazin-2-yl glucoside beta-D-glucosidase 2, chloroplastic (GLU2) (Zea mays (Maize)).